Reading from the N-terminus, the 546-residue chain is Putative inactive G-type lectin S-receptor-like serine/threonine-protein kinase SRK (546 aa).

An N-terminal signal peptide occupies residues 1–31; the sequence is MRGELPNKHHSYTFFVFLFFFLILFPDLSIS. The Extracellular segment spans residues 32-441; the sequence is VNTLSATESL…FGERRTIRGK (410 aa). The 121-residue stretch at 34–154 folds into the Bulb-type lectin domain; the sequence is TLSATESLTI…KINESDEFLW (121 aa). Residues N46, N120, N147, and N243 are each glycosylated (N-linked (GlcNAc...) asparagine). Residues 293-329 form the EGF-like; atypical domain; that stretch reads PKDTCDLYGICGPYAYCDMSTSPTCNCIKGFQPLSPQ. 4 disulfide bridges follow: C297–C309, C303–C317, C378–C403, and C382–C388. Residues 348-428 enclose the PAN domain; the sequence is CGEDRFFRLM…DGQDLFVRLA (81 aa). N-linked (GlcNAc...) asparagine glycosylation is present at N387. The helical transmembrane segment at 442–462 threads the bilayer; the sequence is IIGLIIGISLMLVLSFIIYCF. At 463 to 546 the chain is on the cytoplasmic side; it reads WKKKQKRARA…IVYKGRLLDG (84 aa). The Protein kinase domain maps to 524–546; it reads FSDSNILGRGGFGIVYKGRLLDG. Position 530–538 (530–538) interacts with ATP; sequence LGRGGFGIV.

The protein belongs to the protein kinase superfamily. Ser/Thr protein kinase family.

Its subcellular location is the cell membrane. Its function is as follows. Truncated and inactivated form of SRK, the female specificity determinant of self-incompatibility when active. Most A.thaliana cultivars contain such an inactive form and thus, are self-fertiles. The sequence is that of Putative inactive G-type lectin S-receptor-like serine/threonine-protein kinase SRK (PSEUDOSRKA) from Arabidopsis thaliana (Mouse-ear cress).